Reading from the N-terminus, the 428-residue chain is Putative heme-binding peroxidase (428 aa).

The disordered stretch occupies residues 1 to 33 (MTAIQKPVVAKREAPKAEVNPTVSRSTQTETIK). Residues 21–32 (PTVSRSTQTETI) show a composition bias toward polar residues. The active-site Proton acceptor is the His188. Heme b is bound at residue His312. The Tryptophan radical intermediate role is filled by Trp328.

Belongs to the peroxidase family. Cytochrome c peroxidase subfamily. Heme b serves as cofactor.

Its function is as follows. Destroys radicals which are normally produced within the cells and which are toxic to biological systems. The chain is Putative heme-binding peroxidase from Debaryomyces hansenii (strain ATCC 36239 / CBS 767 / BCRC 21394 / JCM 1990 / NBRC 0083 / IGC 2968) (Yeast).